The chain runs to 138 residues: Ribulose bisphosphate carboxylase small subunit (138 aa).

Belongs to the RuBisCO small chain family. As to quaternary structure, heterohexadecamer of 8 large and 8 small subunits.

It is found in the plastid. The protein localises to the chloroplast. RuBisCO catalyzes two reactions: the carboxylation of D-ribulose 1,5-bisphosphate, the primary event in carbon dioxide fixation, as well as the oxidative fragmentation of the pentose substrate in the photorespiration process. Both reactions occur simultaneously and in competition at the same active site. Although the small subunit is not catalytic it is essential for maximal activity. This chain is Ribulose bisphosphate carboxylase small subunit, found in Cyanidioschyzon merolae (strain NIES-3377 / 10D) (Unicellular red alga).